We begin with the raw amino-acid sequence, 88 residues long: Small ribosomal subunit protein bS20 (88 aa).

The segment covering 1–23 (MPNTKSAEKALRVADANRQENRR) has biased composition (basic and acidic residues). Disordered regions lie at residues 1-28 (MPNTKSAEKALRVADANRQENRRAKSQV) and 69-88 (PKNAARRKSRLMKKLNQAAK). Residues 71-81 (NAARRKSRLMK) are compositionally biased toward basic residues.

This sequence belongs to the bacterial ribosomal protein bS20 family.

Binds directly to 16S ribosomal RNA. The protein is Small ribosomal subunit protein bS20 of Dehalococcoides mccartyi (strain ATCC BAA-2266 / KCTC 15142 / 195) (Dehalococcoides ethenogenes (strain 195)).